The chain runs to 337 residues: Eukaryotic translation initiation factor 3 subunit H (337 aa).

Residues 25 to 158 form the MPN domain; it reads VQIEGLAVLK…LKALKLSDSF (134 aa). At S178 the chain carries Phosphoserine; by ATPK1. Residues 267–278 are compositionally biased toward basic and acidic residues; the sequence is RRTENMARKSAG. Positions 267–290 are disordered; it reads RRTENMARKSAGEEPLPEEDPSNP.

This sequence belongs to the eIF-3 subunit H family. Component of the eukaryotic translation initiation factor 3 (eIF-3) complex. Interacts directly with TIF3A1, TIF3B1, TIF3C1, TIF3E1 and TIF3F1. Associates with the CSN (COP9 signalosome) complex. Binds to CSN1, CSN7 and CSN8. Interacts with ATPK1. Post-translationally, in response to auxin (NAA), phosphorylated at Ser-178 by ATPK1 and binds to polysomes via TOR signaling. This phosphorylation is repressed by Torin-1. As to expression, mostly expressed in roots and flowers, and, to a lower extent, in leaves, stems and siliques.

The protein resides in the cytoplasm. Its function is as follows. Component of the eukaryotic translation initiation factor 3 (eIF-3) complex, which is involved in protein synthesis of a specialized repertoire of mRNAs and, together with other initiation factors, stimulates binding of mRNA and methionyl-tRNAi to the 40S ribosome. The eIF-3 complex specifically targets and initiates translation of a subset of mRNAs involved in cell proliferation (Potential). Regulates translation initiation of specific 5' mRNAs harboring multiple upstream open reading frames (uORFs) in their 5' leader sequence (e.g. BETA-OHASE 2 and LHY). The chain is Eukaryotic translation initiation factor 3 subunit H (TIF3H1) from Arabidopsis thaliana (Mouse-ear cress).